Consider the following 505-residue polypeptide: Maturase K (505 aa).

Belongs to the intron maturase 2 family. MatK subfamily.

The protein localises to the plastid. Its subcellular location is the chloroplast. Its function is as follows. Usually encoded in the trnK tRNA gene intron. Probably assists in splicing its own and other chloroplast group II introns. This is Maturase K from Spinacia oleracea (Spinach).